Consider the following 118-residue polypeptide: Ig heavy chain V region X24 (118 aa).

Residues 1 to 111 (EVKLLESGGG…GYFDYWGQGT (111 aa)) enclose the Ig-like domain.

This chain is Ig heavy chain V region X24, found in Mus musculus (Mouse).